Here is a 238-residue protein sequence, read N- to C-terminus: Thrombin-like enzyme AhV_TL-I (238 aa).

One can recognise a Peptidase S1 domain in the interval 1–229; the sequence is IIGGDECNIN…HLDWIENIIA (229 aa). 6 disulfides stabilise this stretch: cysteine 7–cysteine 141, cysteine 28–cysteine 44, cysteine 76–cysteine 236, cysteine 120–cysteine 190, cysteine 152–cysteine 169, and cysteine 180–cysteine 205. Catalysis depends on histidine 43, which acts as the Charge relay system. N-linked (GlcNAc...) asparagine glycosylation is present at asparagine 81. Aspartate 88 functions as the Charge relay system in the catalytic mechanism. The active-site Charge relay system is serine 184.

It belongs to the peptidase S1 family. Snake venom subfamily. In terms of assembly, monomer. In terms of processing, N-glycosylated at Asn-81 by a disaccharide composed of two N-acetylglucosamine (NAG). The presence of this N-glycan deforms the enzyme and Removing the carbohydrate moiety increases the esterase activity, but induces a complete loss of contractile response on mouse thoracic aorta. As to expression, expressed by the venom gland.

The protein resides in the secreted. Its activity is regulated as follows. Inhibited by PMSF, L-cysteine and partially by SBTI and leupeptin. In terms of biological role, thrombin-like enzyme that shows fibrinogenolytic activity against both the Aalpha (FGA) and Bbeta (FGB) chains of bovine fibrinogen. This enzyme has poor esterolytic activity upon BAEE substrate. It induces mouse thoracic aortic ring contraction with EC(50)=147 nmol/L. It shows vasoconstrictor effects that are independent of the enzymatic activity, but related to the release of calcium ions form the calcium store, potentially through the activation of ryanodine receptors. The polypeptide is Thrombin-like enzyme AhV_TL-I (Gloydius halys (Chinese water mocassin)).